The following is a 300-amino-acid chain: 4-hydroxy-tetrahydrodipicolinate synthase (300 aa).

Pyruvate is bound at residue Thr46. Residue Tyr134 is the Proton donor/acceptor of the active site. The active-site Schiff-base intermediate with substrate is Lys162. Residue Val204 participates in pyruvate binding.

This sequence belongs to the DapA family. In terms of assembly, homotetramer; dimer of dimers.

The protein resides in the cytoplasm. The enzyme catalyses L-aspartate 4-semialdehyde + pyruvate = (2S,4S)-4-hydroxy-2,3,4,5-tetrahydrodipicolinate + H2O + H(+). It functions in the pathway amino-acid biosynthesis; L-lysine biosynthesis via DAP pathway; (S)-tetrahydrodipicolinate from L-aspartate: step 3/4. Catalyzes the condensation of (S)-aspartate-beta-semialdehyde [(S)-ASA] and pyruvate to 4-hydroxy-tetrahydrodipicolinate (HTPA). The sequence is that of 4-hydroxy-tetrahydrodipicolinate synthase from Heliobacterium modesticaldum (strain ATCC 51547 / Ice1).